Consider the following 353-residue polypeptide: DNA-directed RNA polymerase subunit alpha (353 aa).

The segment at 1–234 (MVREKVTVST…DLFIPFLHTE (234 aa)) is alpha N-terminal domain (alpha-NTD). The segment at 267–353 (KRALKSIFID…LAQLIDSKSG (87 aa)) is alpha C-terminal domain (alpha-CTD).

It belongs to the RNA polymerase alpha chain family. As to quaternary structure, in plastids the minimal PEP RNA polymerase catalytic core is composed of four subunits: alpha, beta, beta', and beta''. When a (nuclear-encoded) sigma factor is associated with the core the holoenzyme is formed, which can initiate transcription.

It localises to the plastid. The protein localises to the chloroplast. The enzyme catalyses RNA(n) + a ribonucleoside 5'-triphosphate = RNA(n+1) + diphosphate. Functionally, DNA-dependent RNA polymerase catalyzes the transcription of DNA into RNA using the four ribonucleoside triphosphates as substrates. This chain is DNA-directed RNA polymerase subunit alpha, found in Daucus carota (Wild carrot).